The chain runs to 200 residues: dITP/XTP pyrophosphatase (200 aa).

Residue 7–12 (TSNKHK) coordinates substrate. Positions 38 and 73 each coordinate Mg(2+). The Proton acceptor role is filled by Asp-73. Substrate-binding positions include Ser-74, 154–157 (FGYD), Lys-177, and 182–183 (HR).

It belongs to the HAM1 NTPase family. As to quaternary structure, homodimer. Requires Mg(2+) as cofactor.

The enzyme catalyses XTP + H2O = XMP + diphosphate + H(+). It carries out the reaction dITP + H2O = dIMP + diphosphate + H(+). It catalyses the reaction ITP + H2O = IMP + diphosphate + H(+). Pyrophosphatase that catalyzes the hydrolysis of nucleoside triphosphates to their monophosphate derivatives, with a high preference for the non-canonical purine nucleotides XTP (xanthosine triphosphate), dITP (deoxyinosine triphosphate) and ITP. Seems to function as a house-cleaning enzyme that removes non-canonical purine nucleotides from the nucleotide pool, thus preventing their incorporation into DNA/RNA and avoiding chromosomal lesions. This Campylobacter jejuni subsp. jejuni serotype O:6 (strain 81116 / NCTC 11828) protein is dITP/XTP pyrophosphatase.